The following is a 381-amino-acid chain: GDSL esterase/lipase At3g48460 (381 aa).

Positions 1–26 are cleaved as a signal peptide; the sequence is MSSSISPLLTTAISVAILLFSTISTA. The Nucleophile role is filled by Ser45. N-linked (GlcNAc...) asparagine glycosylation is found at Asn112, Asn140, and Asn258. Residues Asp344 and His347 contribute to the active site.

Belongs to the 'GDSL' lipolytic enzyme family.

It localises to the secreted. This Arabidopsis thaliana (Mouse-ear cress) protein is GDSL esterase/lipase At3g48460.